A 104-amino-acid polypeptide reads, in one-letter code: UPF0213 protein PA3854 (104 aa).

In terms of domain architecture, GIY-YIG spans K13–R88.

The protein belongs to the UPF0213 family.

The polypeptide is UPF0213 protein PA3854 (Pseudomonas aeruginosa (strain ATCC 15692 / DSM 22644 / CIP 104116 / JCM 14847 / LMG 12228 / 1C / PRS 101 / PAO1)).